The chain runs to 126 residues: Phosphoribosyl-AMP cyclohydrolase (126 aa).

Position 82 (Asp-82) interacts with Mg(2+). Position 83 (Cys-83) interacts with Zn(2+). Mg(2+)-binding residues include Asp-84 and Asp-86. Positions 99 and 106 each coordinate Zn(2+).

It belongs to the PRA-CH family. In terms of assembly, homodimer. It depends on Mg(2+) as a cofactor. The cofactor is Zn(2+).

The protein localises to the cytoplasm. The enzyme catalyses 1-(5-phospho-beta-D-ribosyl)-5'-AMP + H2O = 1-(5-phospho-beta-D-ribosyl)-5-[(5-phospho-beta-D-ribosylamino)methylideneamino]imidazole-4-carboxamide. It participates in amino-acid biosynthesis; L-histidine biosynthesis; L-histidine from 5-phospho-alpha-D-ribose 1-diphosphate: step 3/9. Its function is as follows. Catalyzes the hydrolysis of the adenine ring of phosphoribosyl-AMP. The sequence is that of Phosphoribosyl-AMP cyclohydrolase from Sphingopyxis alaskensis (strain DSM 13593 / LMG 18877 / RB2256) (Sphingomonas alaskensis).